A 646-amino-acid chain; its full sequence is Tyrosine-protein kinase MasK (646 aa).

Over 1-415 the chain is Periplasmic; sequence MSPPQTTLPV…PTAGGRRWRT (415 aa). A Protein kinase domain is found at 25-300; that stretch reads YVLVRKLAEG…AFADALETFL (276 aa). Residues 31–39 and lysine 57 each bind ATP; that span reads LAEGGMAEI. The Proton acceptor role is filled by aspartate 163. The tract at residues 373 to 410 is disordered; the sequence is TSAQRPGMSMRPSSPGVPAHGAASRGSTSPESAPTAGG. The chain crosses the membrane as a helical span at residues 416-433; it reads LAVGLAGGLMLAAAGIVG. Over 434 to 646 the chain is Cytoplasmic; that stretch reads YRQWMTTPAS…VMPFSWRVTQ (213 aa). Residues 521 to 547 are disordered; that stretch reads AGAASDVEAEADEEGADAAPVRSKKAS. Acidic residues predominate over residues 527–536; sequence VEAEADEEGA.

It belongs to the protein kinase superfamily. Tyr protein kinase family. In terms of assembly, interacts with MglA. Post-translationally, autophosphorylated.

It is found in the cell inner membrane. It catalyses the reaction L-tyrosyl-[protein] + ATP = O-phospho-L-tyrosyl-[protein] + ADP + H(+). In terms of biological role, essential for growth. Interacts with MglA to control social gliding motility. The sequence is that of Tyrosine-protein kinase MasK (masK) from Myxococcus xanthus (strain DK1622).